Consider the following 3564-residue polypeptide: CUB and sushi domain-containing protein 1 (3564 aa).

Positions 1-29 (MTAWRKFKSLLLPLVLAVLCAGLLTAAKG) are cleaved as a signal peptide. The Extracellular portion of the chain corresponds to 30-3487 (QNCGGLVQGP…NHYQGTSSGS (3458 aa)). Cystine bridges form between C32/C58, C145/C185, C171/C202, C208/C234, C349/C389, C375/C406, C411/C437, C527/C567, C553/C580, and C584/C610. The 109-residue stretch at 32-140 (CGGLVQGPNG…QGFKAMYEVL (109 aa)) folds into the CUB 1 domain. 2 N-linked (GlcNAc...) asparagine glycosylation sites follow: N40 and N57. The Sushi 1 domain occupies 143-204 (HTCGNPGEIL…WDFPAPFCRA (62 aa)). Residues 208 to 312 (CGGTLRGTSG…KGFNAQFQVK (105 aa)) enclose the CUB 2 domain. The 62-residue stretch at 347-408 (DMCPDPGIPD…WNDHRPICRA (62 aa)) folds into the Sushi 2 domain. One can recognise a CUB 3 domain in the interval 411-522 (CGSNLRGPSG…PGFKAVYQEI (112 aa)). Residues 525–582 (GGCGDPGIPAYGKRTGSSFLHGDTLTFECQAAFELVGERVITCQKNNQWSGNKPSCVF) form the Sushi 3 domain. In terms of domain architecture, CUB 4 spans 584–692 (CFFNFTAPSG…RGFNITYTTF (109 aa)). N-linked (GlcNAc...) asparagine glycans are attached at residues N587 and N686. In terms of domain architecture, Sushi 4 spans 695 to 756 (NECHDPGIPV…WSSTVPRCEA (62 aa)). 6 disulfide bridges follow: C697/C738, C723/C754, C758/C784, C873/C913, C899/C926, and C930/C956. The region spanning 758–866 (CGGHLTASSG…VGFLIHYESV (109 aa)) is the CUB 5 domain. A Sushi 5 domain is found at 871–928 (DSCLDPGIPVNGQRHGSNFGIRSTVTFSCDPGYTLSDDEPLVCEKNHQWNHALPSCDA). Positions 930 to 1040 (CGGYIHGKSG…EGFNITFAEY (111 aa)) constitute a CUB 6 domain. N955, N1015, and N1034 each carry an N-linked (GlcNAc...) asparagine glycan. A Sushi 6 domain is found at 1043-1102 (EPCDDPGVPAFSRRIGFQFGVGDTLAFTCFQGYRLEGATKLTCLGGGRRVWSAPLPRCVA). 3 disulfides stabilise this stretch: C1045–C1085, C1071–C1100, and C1104–C1130. Residues 1104-1212 (CGASVKGNEG…QGFQLTYTSF (109 aa)) enclose the CUB 7 domain. N-linked (GlcNAc...) asparagine glycosylation is found at N1184 and N1197. In terms of domain architecture, Sushi 7 spans 1215–1275 (VKCEDPGIPN…WDKPMPSCVA (61 aa)). 12 cysteine pairs are disulfide-bonded: C1217-C1258, C1244-C1273, C1277-C1304, C1391-C1431, C1417-C1447, C1451-C1477, C1564-C1604, C1590-C1621, C1625-C1651, C1741-C1781, C1767-C1798, and C1802-C1828. In terms of domain architecture, CUB 8 spans 1277–1386 (CGGLVHAATS…SGFSIQFSTS (110 aa)). Residues 1389 to 1449 (STCNDPGMPQ…WQPDPPSCIA (61 aa)) enclose the Sushi 8 domain. N1399 carries N-linked (GlcNAc...) asparagine glycosylation. In terms of domain architecture, CUB 9 spans 1451 to 1559 (CGGNLTGPAG…SGFAIEFKEK (109 aa)). Residues N1454 and N1572 are each glycosylated (N-linked (GlcNAc...) asparagine). Positions 1562-1623 (EACFDPGNIM…WDRALPACQA (62 aa)) constitute a Sushi 9 domain. Residues 1625–1733 (CGGQYTGSEG…RGFHFVYQAV (109 aa)) enclose the CUB 10 domain. N1644 carries N-linked (GlcNAc...) asparagine glycosylation. One can recognise a Sushi 10 domain in the interval 1739–1800 (TQCSSVPEPR…WNDTIPSCVV (62 aa)). 3 N-linked (GlcNAc...) asparagine glycosylation sites follow: N1792, N1805, and N1882. Positions 1802-1910 (CSGNFTQRRG…AGFHLEYKTV (109 aa)) constitute a CUB 11 domain. Residues 1913–1972 (AACQEPALPSNGIKIGDRYMVNDVLSFQCEPGYTLQGRSHISCMPGTVRRWNYPSPLCIA) enclose the Sushi 11 domain. Intrachain disulfides connect C1915–C1955, C1941–C1970, and C1974–C2000. The 109-residue stretch at 1974–2082 (CGGTLTSMSG…QGFKLSYQAY (109 aa)) folds into the CUB 12 domain. N-linked (GlcNAc...) asparagine glycosylation is present at N2018. The 60-residue stretch at 2085–2144 (QNCPDPPAFQNGFMINSDYSVGQSISFECYPGYILLGHPVLTCQHGTDRNWNYPFPRCDA) folds into the Sushi 12 domain. Cystine bridges form between C2087–C2127, C2113–C2142, and C2146–C2172. One can recognise a CUB 13 domain in the interval 2146-2257 (CGYNVTSQNG…LNFHAFQLKR (112 aa)). N-linked (GlcNAc...) asparagine glycans are attached at residues N2149, N2154, and N2187. One can recognise a Sushi 13 domain in the interval 2256 to 2317 (KRCPPPPAVP…FQGSPPTCEA (62 aa)). 3 disulfide bridges follow: C2258–C2300, C2286–C2315, and C2319–C2347. Residues 2319-2430 (CPANEVRTES…KGFKIRYAAP (112 aa)) enclose the CUB 14 domain. N-linked (GlcNAc...) asparagine glycans are attached at residues N2358, N2394, N2400, N2445, N2470, and N2503. Sushi domains follow at residues 2430–2492 (PYCS…LCQA), 2493–2554 (VSCG…TCKP), 2555–2619 (VPCP…RCKV), 2620–2677 (ISCG…RCLA), 2678–2735 (GHCG…VCVP), 2736–2793 (ITCG…ICRV), 2794–2856 (VNCS…KCLA), 2857–2914 (ISCG…HCSG), 2918–2975 (GFCG…VCEA), 2976–3034 (VSCG…DCTI), 3035–3094 (ISCG…LCKA), 3095–3152 (VLCN…QCLP), 3153–3210 (VFCG…TCID), 3214–3272 (TACP…ECIP), and 3273–3332 (HACR…VCKS). 12 disulfide bridges follow: C2432/C2473, C2459/C2490, C2495/C2537, C2521/C2552, C2557/C2602, C2588/C2617, C2622/C2662, C2648/C2675, C2680/C2720, C2706/C2733, C2738/C2778, and C2764/C2791. An N-linked (GlcNAc...) asparagine glycan is attached at N2605. N-linked (GlcNAc...) asparagine glycans are attached at residues N2750 and N2761. N2795 is a glycosylation site (N-linked (GlcNAc...) asparagine). 18 cysteine pairs are disulfide-bonded: C2796–C2841, C2827–C2854, C2859–C2899, C2885–C2912, C2920–C2960, C2946–C2973, C2978–C3019, C3005–C3032, C3037–C3079, C3063–C3092, C3097–C3137, C3123–C3150, C3155–C3195, C3181–C3208, C3216–C3257, C3243–C3270, C3275–C3317, and C3302–C3330. The N-linked (GlcNAc...) asparagine glycan is linked to N2894. N-linked (GlcNAc...) asparagine glycosylation occurs at N2963. 3 N-linked (GlcNAc...) asparagine glycosylation sites follow: N3022, N3056, and N3086. Residues N3228 and N3260 are each glycosylated (N-linked (GlcNAc...) asparagine). N-linked (GlcNAc...) asparagine glycans are attached at residues N3339, N3379, and N3386. Residues 3488–3508 (VAAAILVPFFALILSGFAFYL) traverse the membrane as a helical segment. Residues 3509 to 3564 (YKHRTRPKVQYNGYAGHENSNGQASFENPMYDTNLKPTEAKAVRFDTTLNTVCTVV) lie on the Cytoplasmic side of the membrane.

This sequence belongs to the CSMD family.

It is found in the membrane. This is CUB and sushi domain-containing protein 1 (Csmd1) from Mus musculus (Mouse).